The sequence spans 404 residues: S-adenosylmethionine synthase (404 aa).

An ATP-binding site is contributed by 139–144; it reads GKGSTD.

It belongs to the AdoMet synthase 2 family. The cofactor is Mg(2+).

It catalyses the reaction L-methionine + ATP + H2O = S-adenosyl-L-methionine + phosphate + diphosphate. The protein operates within amino-acid biosynthesis; S-adenosyl-L-methionine biosynthesis; S-adenosyl-L-methionine from L-methionine: step 1/1. Its function is as follows. Catalyzes the formation of S-adenosylmethionine from methionine and ATP. This chain is S-adenosylmethionine synthase, found in Saccharolobus islandicus (strain L.S.2.15 / Lassen #1) (Sulfolobus islandicus).